Here is a 1011-residue protein sequence, read N- to C-terminus: Phosphoenolpyruvate carboxylase (1011 aa).

Residues His207 and Lys658 contribute to the active site.

Belongs to the PEPCase type 1 family. Mg(2+) is required as a cofactor.

The enzyme catalyses oxaloacetate + phosphate = phosphoenolpyruvate + hydrogencarbonate. In terms of biological role, forms oxaloacetate, a four-carbon dicarboxylic acid source for the tricarboxylic acid cycle. The sequence is that of Phosphoenolpyruvate carboxylase (ppc) from Thermosynechococcus vestitus (strain NIES-2133 / IAM M-273 / BP-1).